We begin with the raw amino-acid sequence, 310 residues long: MSQNLIRIATRKSPLAMWQAEFVKAELEKIHEGLTVELLPMSTKGDIILDTPLAKVGGKGLFVKELEVAMLEGLADIAVHSMKDVPVDFPEGLGLEVICEREDPRDAFVSNTYKTIEDLPQGAVVGTSSLRRQCQIRAARPDLVIKDLRGNVGTRLAKLDAGNYDAIILAAAGLKRLKLEERIASFISAEQSLPANGQGAVGIECRTDDARVKALLAPLEHAETRMRVTAERAMNTRLEGGCQVPIGAYAEIDGDTLSLRGLVGNPDGSQIITASSSGSTADAEKLGVALAEELLSKGAKTILDAVYANA.

Cysteine 242 is subject to S-(dipyrrolylmethanemethyl)cysteine.

Belongs to the HMBS family. Monomer. Dipyrromethane serves as cofactor.

The catalysed reaction is 4 porphobilinogen + H2O = hydroxymethylbilane + 4 NH4(+). It functions in the pathway porphyrin-containing compound metabolism; protoporphyrin-IX biosynthesis; coproporphyrinogen-III from 5-aminolevulinate: step 2/4. Functionally, tetrapolymerization of the monopyrrole PBG into the hydroxymethylbilane pre-uroporphyrinogen in several discrete steps. The protein is Porphobilinogen deaminase of Shewanella pealeana (strain ATCC 700345 / ANG-SQ1).